We begin with the raw amino-acid sequence, 279 residues long: Dermonecrotic toxin LbSicTox-alphaIB1a (279 aa).

His-11 is an active-site residue. Residues Glu-31 and Asp-33 each coordinate Mg(2+). Residue His-47 is the Nucleophile of the active site. 2 cysteine pairs are disulfide-bonded: Cys-51-Cys-57 and Cys-53-Cys-196. Asp-91 is a binding site for Mg(2+).

This sequence belongs to the arthropod phospholipase D family. Class II subfamily. Class IIa sub-subfamily. The cofactor is Mg(2+). As to expression, expressed by the venom gland.

The protein localises to the secreted. It catalyses the reaction an N-(acyl)-sphingosylphosphocholine = an N-(acyl)-sphingosyl-1,3-cyclic phosphate + choline. The catalysed reaction is an N-(acyl)-sphingosylphosphoethanolamine = an N-(acyl)-sphingosyl-1,3-cyclic phosphate + ethanolamine. The enzyme catalyses a 1-acyl-sn-glycero-3-phosphocholine = a 1-acyl-sn-glycero-2,3-cyclic phosphate + choline. It carries out the reaction a 1-acyl-sn-glycero-3-phosphoethanolamine = a 1-acyl-sn-glycero-2,3-cyclic phosphate + ethanolamine. In terms of biological role, dermonecrotic toxins cleave the phosphodiester linkage between the phosphate and headgroup of certain phospholipids (sphingolipid and lysolipid substrates), forming an alcohol (often choline) and a cyclic phosphate. This toxin acts on sphingomyelin (SM) with high activity (about 30.5-31.5 U/mg). It may also act on ceramide phosphoethanolamine (CPE), lysophosphatidylcholine (LPC) and lysophosphatidylethanolamine (LPE), but not on lysophosphatidylserine (LPS), and lysophosphatidylglycerol (LPG). It acts by transphosphatidylation, releasing exclusively cyclic phosphate products as second products. Induces dermonecrosis, hemolysis, increased vascular permeability, edema, inflammatory response, and platelet aggregation. Is lethal to mice. In Loxosceles boneti (North American fiddleback spider), this protein is Dermonecrotic toxin LbSicTox-alphaIB1a.